The sequence spans 308 residues: Transaldolase (308 aa).

The active-site Schiff-base intermediate with substrate is Lys125.

This sequence belongs to the transaldolase family. Type 1 subfamily. As to quaternary structure, homodimer.

The protein localises to the cytoplasm. It catalyses the reaction D-sedoheptulose 7-phosphate + D-glyceraldehyde 3-phosphate = D-erythrose 4-phosphate + beta-D-fructose 6-phosphate. The protein operates within carbohydrate degradation; pentose phosphate pathway; D-glyceraldehyde 3-phosphate and beta-D-fructose 6-phosphate from D-ribose 5-phosphate and D-xylulose 5-phosphate (non-oxidative stage): step 2/3. Transaldolase is important for the balance of metabolites in the pentose-phosphate pathway. This is Transaldolase from Pseudomonas putida (strain ATCC 47054 / DSM 6125 / CFBP 8728 / NCIMB 11950 / KT2440).